The primary structure comprises 175 residues: Myosin regulatory light chain 2, atrial isoform (175 aa).

Position 2 is an N-acetylalanine (Ala-2). Phosphoserine is present on residues Ser-22 and Ser-23. EF-hand domains follow at residues 32 to 67, 102 to 137, and 138 to 173; these read AQIQ…LGKV, DPEE…QADK, and FSPA…GDEK. Positions 45, 47, 49, and 56 each coordinate Ca(2+).

In terms of assembly, myosin is a hexamer of 2 heavy chains and 4 light chains. In terms of tissue distribution, predominantly expressed in adult atrial muscle.

The sequence is that of Myosin regulatory light chain 2, atrial isoform (MYL7) from Homo sapiens (Human).